A 132-amino-acid chain; its full sequence is Bleomycin resistance protein (132 aa).

In terms of domain architecture, VOC spans 1–129 (MLQSIPALPV…DNNLISFFQQ (129 aa)).

Belongs to the bleomycin resistance protein family.

Its function is as follows. Binding protein with a strong affinity to the bleomycin family of antibiotics. The protein is Bleomycin resistance protein (bleO) of Geobacillus stearothermophilus (Bacillus stearothermophilus).